The following is an 882-amino-acid chain: Valine--tRNA ligase (882 aa).

The 'HIGH' region signature appears at 45 to 55; that stretch reads PNVTGKLHLGH. The 'KMSKS' region signature appears at 519–523; it reads KMSKS. An ATP-binding site is contributed by Lys522. Residues 808 to 877 adopt a coiled-coil conformation; that stretch reads LADLLNVEEE…DATQERIVEM (70 aa).

This sequence belongs to the class-I aminoacyl-tRNA synthetase family. ValS type 1 subfamily. As to quaternary structure, monomer.

The protein localises to the cytoplasm. The catalysed reaction is tRNA(Val) + L-valine + ATP = L-valyl-tRNA(Val) + AMP + diphosphate. In terms of biological role, catalyzes the attachment of valine to tRNA(Val). As ValRS can inadvertently accommodate and process structurally similar amino acids such as threonine, to avoid such errors, it has a 'posttransfer' editing activity that hydrolyzes mischarged Thr-tRNA(Val) in a tRNA-dependent manner. The polypeptide is Valine--tRNA ligase (Streptococcus pyogenes serotype M6 (strain ATCC BAA-946 / MGAS10394)).